The chain runs to 191 residues: RNA pyrophosphohydrolase (191 aa).

In terms of domain architecture, Nudix hydrolase spans 6–149; sequence GYRLNVGIIL…KREVYRQALS (144 aa). Positions 38–59 match the Nudix box motif; it reads GGIKVDEDPDAAMFRELYEEVG. The interval 162–191 is disordered; that stretch reads GAQAVSDAGGTATRQIPVATEPSGPSSSQR.

Belongs to the Nudix hydrolase family. RppH subfamily. The cofactor is a divalent metal cation.

In terms of biological role, accelerates the degradation of transcripts by removing pyrophosphate from the 5'-end of triphosphorylated RNA, leading to a more labile monophosphorylated state that can stimulate subsequent ribonuclease cleavage. The chain is RNA pyrophosphohydrolase from Methylococcus capsulatus (strain ATCC 33009 / NCIMB 11132 / Bath).